Reading from the N-terminus, the 150-residue chain is Endoribonuclease YbeY (150 aa).

3 residues coordinate Zn(2+): His113, His117, and His123.

This sequence belongs to the endoribonuclease YbeY family. Zn(2+) is required as a cofactor.

The protein resides in the cytoplasm. Functionally, single strand-specific metallo-endoribonuclease involved in late-stage 70S ribosome quality control and in maturation of the 3' terminus of the 16S rRNA. This chain is Endoribonuclease YbeY, found in Wolbachia sp. subsp. Drosophila simulans (strain wRi).